Here is a 56-residue protein sequence, read N- to C-terminus: Large ribosomal subunit protein bL33c (56 aa).

This sequence belongs to the bacterial ribosomal protein bL33 family.

Its subcellular location is the plastid. It localises to the chloroplast. This chain is Large ribosomal subunit protein bL33c, found in Rhodomonas salina (Cryptomonas salina).